The following is a 440-amino-acid chain: Protein dumpy-20 (440 aa).

The segment at 96–119 (ILSDPSLHGSNSSSSTSDVGSSVD) is disordered. A compositionally biased stretch (low complexity) spans 98-119 (SDPSLHGSNSSSSTSDVGSSVD). BED-type zinc fingers lie at residues 137–186 (PTEN…YQKV) and 350–399 (KTEH…YNDV). Zn(2+) is bound by residues Cys156, Cys159, His174, His179, Cys369, Cys372, His387, and His392.

In terms of biological role, may be directly or indirectly involved in cuticle function. The polypeptide is Protein dumpy-20 (dpy-20) (Caenorhabditis elegans).